The following is a 938-amino-acid chain: Translation initiation factor IF-2 (938 aa).

Positions 55 to 322 are disordered; sequence KAEASAAPAA…RKSKRARRQE (268 aa). Composition is skewed to low complexity over residues 57–68 and 77–117; these read EASAAPAAPAEK and KKAA…AAAP. Residues 118–136 are compositionally biased toward pro residues; it reads KPGPKPAPVAEQPAPPAEP. Low complexity-rich tracts occupy residues 141 to 153, 180 to 198, and 224 to 233; these read APEAPAASAAPAA, GMGRRPAPGAPAAPGAGDN, and MMPKSPSAFG. The span at 247-293 shows a compositional bias: gly residues; the sequence is PGRGGAPGRGGAPGRGGVGTGAPGRGGAPGGGFGPSGGGRPGGGRPG. A compositionally biased stretch (basic residues) spans 310-319; that stretch reads RRGRKSKRAR. A tr-type G domain is found at 431 to 603; the sequence is ARPPVVTVMG…VVLTADASLD (173 aa). Residues 440–447 form a G1 region; sequence GHVDHGKT. 440–447 contributes to the GTP binding site; sequence GHVDHGKT. Residues 465-469 form a G2 region; it reads GITQH. The tract at residues 490–493 is G3; that stretch reads DTPG. GTP-binding positions include 490–494 and 544–547; these read DTPGH and NKID. The interval 544–547 is G4; sequence NKID. Positions 580-582 are G5; the sequence is SAK.

The protein belongs to the TRAFAC class translation factor GTPase superfamily. Classic translation factor GTPase family. IF-2 subfamily.

It is found in the cytoplasm. One of the essential components for the initiation of protein synthesis. Protects formylmethionyl-tRNA from spontaneous hydrolysis and promotes its binding to the 30S ribosomal subunits. Also involved in the hydrolysis of GTP during the formation of the 70S ribosomal complex. This is Translation initiation factor IF-2 from Nocardioides sp. (strain ATCC BAA-499 / JS614).